Consider the following 699-residue polypeptide: Glutamine--fructose-6-phosphate aminotransferase [isomerizing] (699 aa).

The active-site Nucleophile is C2. A Glutamine amidotransferase type-2 domain is found at 2–303; it reads CGIFGYANFS…DNDIVHISNG (302 aa). SIS domains follow at residues 377 to 516 and 544 to 689; these read HVSG…QNLV and SVKS…ADFP.

It carries out the reaction D-fructose 6-phosphate + L-glutamine = D-glucosamine 6-phosphate + L-glutamate. Its pathway is nucleotide-sugar biosynthesis; UDP-N-acetyl-alpha-D-glucosamine biosynthesis; alpha-D-glucosamine 6-phosphate from D-fructose 6-phosphate: step 1/1. In terms of biological role, involved in amino sugar synthesis (formation of chitin, supplies the amino sugars of asparagine-linked oligosaccharides of glycoproteins). The chain is Glutamine--fructose-6-phosphate aminotransferase [isomerizing] (GFA1) from Encephalitozoon cuniculi (strain GB-M1) (Microsporidian parasite).